A 162-amino-acid chain; its full sequence is 2-C-methyl-D-erythritol 2,4-cyclodiphosphate synthase (162 aa).

A divalent metal cation-binding residues include D8 and H10. Residues 8–10 (DVH) and 36–37 (HS) each bind 4-CDP-2-C-methyl-D-erythritol 2-phosphate. H44 contacts a divalent metal cation. 4-CDP-2-C-methyl-D-erythritol 2-phosphate contacts are provided by residues 58-60 (DIG), 63-67 (FPDTD), 102-108 (AQAPKMA), 134-137 (TTTE), F141, and R144.

It belongs to the IspF family. In terms of assembly, homotrimer. Requires a divalent metal cation as cofactor.

It catalyses the reaction 4-CDP-2-C-methyl-D-erythritol 2-phosphate = 2-C-methyl-D-erythritol 2,4-cyclic diphosphate + CMP. It functions in the pathway isoprenoid biosynthesis; isopentenyl diphosphate biosynthesis via DXP pathway; isopentenyl diphosphate from 1-deoxy-D-xylulose 5-phosphate: step 4/6. Its function is as follows. Involved in the biosynthesis of isopentenyl diphosphate (IPP) and dimethylallyl diphosphate (DMAPP), two major building blocks of isoprenoid compounds. Catalyzes the conversion of 4-diphosphocytidyl-2-C-methyl-D-erythritol 2-phosphate (CDP-ME2P) to 2-C-methyl-D-erythritol 2,4-cyclodiphosphate (ME-CPP) with a corresponding release of cytidine 5-monophosphate (CMP). This Yersinia pseudotuberculosis serotype O:1b (strain IP 31758) protein is 2-C-methyl-D-erythritol 2,4-cyclodiphosphate synthase.